A 282-amino-acid chain; its full sequence is Ribosomal RNA small subunit methyltransferase I (282 aa).

This sequence belongs to the methyltransferase superfamily. RsmI family.

The protein localises to the cytoplasm. The enzyme catalyses cytidine(1402) in 16S rRNA + S-adenosyl-L-methionine = 2'-O-methylcytidine(1402) in 16S rRNA + S-adenosyl-L-homocysteine + H(+). Functionally, catalyzes the 2'-O-methylation of the ribose of cytidine 1402 (C1402) in 16S rRNA. The sequence is that of Ribosomal RNA small subunit methyltransferase I from Buchnera aphidicola subsp. Acyrthosiphon pisum (strain APS) (Acyrthosiphon pisum symbiotic bacterium).